A 99-amino-acid polypeptide reads, in one-letter code: Bombyxin A-1 homolog (99 aa).

The signal sequence occupies residues 1–19 (MKTQVLFLVFALAAVMVSG). 3 cysteine pairs are disulfide-bonded: Cys27–Cys86, Cys39–Cys99, and Cys85–Cys90. Residues 48 to 76 (TPYISPENEGYGWRWLEPQRARQLDGARG) constitute a propeptide, c peptide like.

Belongs to the insulin family. Heterodimer of a B chain and an A chain linked by two disulfide bonds.

Its subcellular location is the secreted. Brain peptide responsible for activation of prothoracic glands to produce ecdysone in insects. The sequence is that of Bombyxin A-1 homolog (SBXA1) from Samia cynthia (Ailanthus silkmoth).